The sequence spans 217 residues: U2 snRNP component ist3 (217 aa).

In terms of domain architecture, RRM spans 31–109 (AYIYIGNLDF…RLVRVDHVAS (79 aa)). 2 disordered regions span residues 119–138 (PANLVPLGESGSSLSVSTIN) and 154–217 (EVEQ…DLDG). A compositionally biased stretch (polar residues) spans 128-138 (SGSSLSVSTIN). Serine 160 carries the phosphoserine modification. 2 stretches are compositionally biased toward basic and acidic residues: residues 161–176 (PKDEKDLLDPMRDYIH) and 185–198 (HESSDRSDKSDSNR). The span at 199-217 (HSRHHRRHSRSRRHRDLDG) shows a compositional bias: basic residues.

It belongs to the IST3 family. In terms of assembly, belongs to the 40S cdc5-associated complex (or cwf complex), a spliceosome sub-complex reminiscent of a late-stage spliceosome composed of the U2, U5 and U6 snRNAs and at least brr2, cdc5, cwf2/prp3, cwf3/syf1, cwf4/syf3, cwf5/ecm2, spp42/cwf6, cwf7/spf27, cwf8, cwf9, cwf10, cwf11, cwf12, prp45/cwf13, cwf14, cwf15, cwf16, cwf17, cwf18, cwf19, cwf20, cwf21, cwf22, cwf23, cwf24, cwf25, cwf26, cyp7/cwf27, cwf28, cwf29/ist3, lea1, msl1, prp5/cwf1, prp10, prp12/sap130, prp17, prp22, sap61, sap62, sap114, sap145, slu7, smb1, smd1, smd3, smf1, smg1 and syf2.

Its subcellular location is the nucleus. Required for pre-mRNA splicing and spliceosome assembly. The chain is U2 snRNP component ist3 (cwf29) from Schizosaccharomyces pombe (strain 972 / ATCC 24843) (Fission yeast).